Reading from the N-terminus, the 126-residue chain is Fluoride-specific ion channel FluC (126 aa).

The next 4 helical transmembrane spans lie at 4 to 24, 35 to 55, 68 to 88, and 100 to 120; these read ILAIALGAAIGANLRYGIGLW, YGTFIINLLGCLGIGLLLTLI, MLVTGLLGGFTTFSTFGYESF, and IGYMVGSVVGGLIAVIIGVGL. Positions 75 and 78 each coordinate Na(+).

Belongs to the fluoride channel Fluc/FEX (TC 1.A.43) family.

The protein localises to the cell membrane. The catalysed reaction is fluoride(in) = fluoride(out). With respect to regulation, na(+) is not transported, but it plays an essential structural role and its presence is essential for fluoride channel function. Its function is as follows. Fluoride-specific ion channel. Important for reducing fluoride concentration in the cell, thus reducing its toxicity. In Chloroflexus aurantiacus (strain ATCC 29366 / DSM 635 / J-10-fl), this protein is Fluoride-specific ion channel FluC.